The following is a 432-amino-acid chain: Serine--tRNA ligase (432 aa).

239 to 241 (TSE) contacts L-serine. 270 to 272 (RSE) is a binding site for ATP. Glu293 lines the L-serine pocket. Residue 357–360 (EISS) coordinates ATP. Ser392 provides a ligand contact to L-serine.

The protein belongs to the class-II aminoacyl-tRNA synthetase family. Type-1 seryl-tRNA synthetase subfamily. Homodimer. The tRNA molecule binds across the dimer.

The protein localises to the cytoplasm. The enzyme catalyses tRNA(Ser) + L-serine + ATP = L-seryl-tRNA(Ser) + AMP + diphosphate + H(+). It catalyses the reaction tRNA(Sec) + L-serine + ATP = L-seryl-tRNA(Sec) + AMP + diphosphate + H(+). The protein operates within aminoacyl-tRNA biosynthesis; selenocysteinyl-tRNA(Sec) biosynthesis; L-seryl-tRNA(Sec) from L-serine and tRNA(Sec): step 1/1. In terms of biological role, catalyzes the attachment of serine to tRNA(Ser). Is also able to aminoacylate tRNA(Sec) with serine, to form the misacylated tRNA L-seryl-tRNA(Sec), which will be further converted into selenocysteinyl-tRNA(Sec). This chain is Serine--tRNA ligase, found in Methylibium petroleiphilum (strain ATCC BAA-1232 / LMG 22953 / PM1).